The primary structure comprises 434 residues: MNHPDIARRVYNHTWKLDPIIRSLLDTDFYKLLMVQMIWGLYPTVNVTFSLINRTKTIRLADDIDESELRAQLDHALSLRFTKKEMIWLAGNTFYGRKQIFEPDFLQWLENFQLPEYELARKDGQYILHFHGSWAHSSMWEIPALAIISELRSRAALKKLDRFALDVLYARAKAKMWRKVERLKKLPDIKISDFGTRRRHSFLWQRWCVEALKEGIGDSFTGTSNVLLAMDTDLEALGTNAHELPMVIAALSNNDDELRRAPYQVLQDWNRYYGGNLLIVLPDTFGTEAFLCDAPDWVADWTGFRPDSAPPIEGGERIIQWWKEKGQDPREKLLIFSDALDVDTIEKTYHHFHGKVRMSFGWGTDLTNDFTGCAPQEIATLDALSLVCKVTHANGRPAVKLSDNPEKTIGDSKEVQRYLNFFGNKKRVARPVKM.

His242 carries the post-translational modification Phosphohistidine; by autocatalysis.

This sequence belongs to the NAPRTase family. In terms of processing, transiently phosphorylated on a His residue during the reaction cycle. Phosphorylation strongly increases the affinity for substrates and increases the rate of nicotinate D-ribonucleotide production. Dephosphorylation regenerates the low-affinity form of the enzyme, leading to product release.

The enzyme catalyses nicotinate + 5-phospho-alpha-D-ribose 1-diphosphate + ATP + H2O = nicotinate beta-D-ribonucleotide + ADP + phosphate + diphosphate. Its pathway is cofactor biosynthesis; NAD(+) biosynthesis; nicotinate D-ribonucleotide from nicotinate: step 1/1. Catalyzes the synthesis of beta-nicotinate D-ribonucleotide from nicotinate and 5-phospho-D-ribose 1-phosphate at the expense of ATP. This is Nicotinate phosphoribosyltransferase from Bartonella tribocorum (strain CIP 105476 / IBS 506).